Here is a 514-residue protein sequence, read N- to C-terminus: Glucose-1-phosphate adenylyltransferase small subunit 2, chloroplastic/amyloplastic/cytosolic (514 aa).

A chloroplast-targeting transit peptide spans 1–64 (MAMAAAMGVA…RRRPLVFSPR (64 aa)). The tract at residues 35 to 74 (RPRRPRGVASSSSSSSSAGRRRRPLVFSPRAVSDSKSSQT) is disordered. The span at 41 to 52 (GVASSSSSSSSA) shows a compositional bias: low complexity.

The protein belongs to the bacterial/plant glucose-1-phosphate adenylyltransferase family. In terms of assembly, heterotetramer composed of two small and two large subunits. As to expression, expressed in leaves.

It localises to the plastid. The protein resides in the chloroplast. The protein localises to the amyloplast. It is found in the cytoplasm. Its subcellular location is the cytosol. It carries out the reaction alpha-D-glucose 1-phosphate + ATP + H(+) = ADP-alpha-D-glucose + diphosphate. The protein operates within glycan biosynthesis; starch biosynthesis. With respect to regulation, activated by 3'phosphoglycerate, inhibited by orthophosphate. Allosteric regulation. Inhibited by inorganic phosphate (Pi). Functionally, involved in synthesis of starch. Catalyzes the synthesis of ADP-glucose, a molecule that serves as an activated glycosyl donor for alpha-1,4-glucan synthesis. The chloroplastic isoform 1 is essential for starch synthesis in leaf chloroplasts and the cytosolic isoform 2 for synthesis in seed endosperm. The chain is Glucose-1-phosphate adenylyltransferase small subunit 2, chloroplastic/amyloplastic/cytosolic from Oryza sativa subsp. japonica (Rice).